We begin with the raw amino-acid sequence, 3122 residues long: DNA polymerase zeta catalytic subunit (3122 aa).

5 disordered regions span residues 270 to 289, 425 to 457, 487 to 509, 524 to 545, and 842 to 886; these read QRRRNRNESSQISQPESQDC, GYQGEKNRMPLPCHSFGESQNPQNSDDEENEPQ, LCRNAHRSSTEEDDSSSEEEMEW, LDGTADENSDNPLNNENSRAHS, and TSTK…TFEN. Residues 277-286 are compositionally biased toward polar residues; sequence ESSQISQPES. Acidic residues predominate over residues 497–509; it reads EEDDSSSEEEMEW. 2 stretches are compositionally biased toward polar residues: residues 533 to 545 and 842 to 860; these read DNPLNNENSRAHS and TSTKSTETGATKDSCTHND. Position 1029 is a phosphoserine (serine 1029). 7 disordered regions span residues 1034 to 1075, 1154 to 1285, 1429 to 1453, 1538 to 1616, 1842 to 1869, 1959 to 1979, and 2091 to 2138; these read YPIY…TLSF, VYNT…PTGI, VSVSEQSKTSETCSPGNAASEESQT, KAQS…LSDD, NDVLTPTPDSSPRSTSSPLQSKNGSFTP, NPRPGSPLRNGQAVVNKESSN, and AAVP…RHSS. A Phosphothreonine modification is found at threonine 1040. Composition is skewed to basic residues over residues 1042–1063 and 1166–1179; these read KKSHRRKSKHKSAKKKPGKQHR and KASRARAQVKKSKA. The segment covering 1215–1239 has biased composition (basic and acidic residues); sequence RANEKSLSRKHAIPADEKMKPHSEA. Residues 1243–1270 are compositionally biased toward polar residues; the sequence is PNHQSVSELTSSSGAQALSKQKEMSQTG. The span at 1429–1440 shows a compositional bias: low complexity; that stretch reads VSVSEQSKTSET. Polar residues-rich tracts occupy residues 1441–1453 and 1538–1561; these read CSPGNAASEESQT and KAQSTNVVQDSTSTHQPDKNISVS. Residues 1566 to 1587 show a composition bias toward basic residues; it reads KANKRTRPVTSPRKPRTPRRTK. A compositionally biased stretch (basic and acidic residues) spans 1588 to 1598; it reads PKEQTPRRLKV. A compositionally biased stretch (polar residues) spans 1602–1615; sequence NLQTSGHLDNSLSD. Positions 1844–1895 are mediates interaction with MAD2L2; it reads VLTPTPDSSPRSTSSPLQSKNGSFTPRTAHILKPLMSPPSREEIVATLLDHD. Over residues 1846–1859 the composition is skewed to low complexity; the sequence is TPTPDSSPRSTSSP. Residues 1860–1869 are compositionally biased toward polar residues; sequence LQSKNGSFTP. Serine 1964 carries the phosphoserine modification. Zn(2+)-binding residues include cysteine 3034, cysteine 3037, cysteine 3046, and cysteine 3049. A CysA-type zinc finger spans residues 3034-3049; it reads CPVCDDLTQHGICSKC. 4 residues coordinate [4Fe-4S] cluster: cysteine 3078, cysteine 3081, cysteine 3091, and cysteine 3096. The CysB motif signature appears at 3078–3096; that stretch reads CRNCTGSFDRHIPCVSLNC.

Belongs to the DNA polymerase type-B family. In terms of assembly, heterodimer with MAD2L2. This dimer forms the minimal DNA polymerase zeta complex (Pol-zeta2), with REV3L bearing DNA polymerase catalytic activity, although its activity is very low in this context. Component of the tetrameric Pol-zeta complex (Pol-zeta4), which consists of REV3L, MAD2L2, POLD2 and POLD3; Pol-zeta4 is the fully active form of DNA polymerase zeta. [4Fe-4S] cluster serves as cofactor.

It is found in the nucleus. It carries out the reaction DNA(n) + a 2'-deoxyribonucleoside 5'-triphosphate = DNA(n+1) + diphosphate. Functionally, catalytic subunit of the DNA polymerase zeta complex, an error-prone polymerase specialized in translesion DNA synthesis (TLS). Lacks an intrinsic 3'-5' exonuclease activity and thus has no proofreading function. The polypeptide is DNA polymerase zeta catalytic subunit (Rev3l) (Mus musculus (Mouse)).